Reading from the N-terminus, the 744-residue chain is Tripartite motif-containing protein 2 (744 aa).

Ser10 is modified (phosphoserine). The RING-type zinc finger occupies 23–64; sequence CSICLERYKNPKVLPCLHTFCERCLQNYIPAHSLTLSCPVCR. The segment at 113–154 adopts a B box-type zinc-finger fold; that stretch reads GKPLSCPNHDGNVMDFYCQSCETAMCRECTEGEHAEHPTVPL. Zn(2+) is bound by residues Cys118, His121, Cys141, and His146. The stretch at 320-421 is one Filamin repeat; the sequence is TTNAVASETV…IRGSPFKLKV (102 aa). Phosphothreonine is present on Thr371. A phosphoserine mark is found at Ser375, Ser424, and Ser428. Positions 432 to 462 are disordered; sequence EGVKRRVKSPGSGHVKQKAVKRPASMYSTGK. 6 NHL repeats span residues 473–516, 520–563, 564–605, 609–652, 656–699, and 700–743; these read IFRV…FSND, KSRF…FSSD, GKFK…FQPN, VTRF…FNQE, MLKF…FDGS, and GSFL…YRYL.

This sequence belongs to the TRIM/RBCC family. As to quaternary structure, forms homooligomers. Interacts with TRIM3; this interaction reduces TRIM2 activity. Interacts with myosin V; myosin V may not be a substrate for ubiquitination. Interacts with NEFL. Interacts with phosphorylated BCL2L11. Interacts with SIRPA. Post-translationally, RING-type zinc finger-dependent and UBE2D1-dependent autoubiquitination.

The protein resides in the cytoplasm. The enzyme catalyses S-ubiquitinyl-[E2 ubiquitin-conjugating enzyme]-L-cysteine + [acceptor protein]-L-lysine = [E2 ubiquitin-conjugating enzyme]-L-cysteine + N(6)-ubiquitinyl-[acceptor protein]-L-lysine.. Its pathway is protein modification; protein ubiquitination. In terms of biological role, UBE2D1-dependent E3 ubiquitin-protein ligase that mediates the ubiquitination of NEFL and of phosphorylated BCL2L11. Plays a neuroprotective function. May play a role in neuronal rapid ischemic tolerance. Plays a role in antiviral immunity and limits New World arenavirus infection independently of its ubiquitin ligase activity. This Ailuropoda melanoleuca (Giant panda) protein is Tripartite motif-containing protein 2 (TRIM2).